The chain runs to 37 residues: Large ribosomal subunit protein bL36c (37 aa).

The protein belongs to the bacterial ribosomal protein bL36 family.

Its subcellular location is the plastid. The protein localises to the chloroplast. The protein is Large ribosomal subunit protein bL36c of Liriodendron tulipifera (Tuliptree).